The following is a 166-amino-acid chain: Regulator of ribonuclease activity A (166 aa).

This sequence belongs to the RraA family. As to quaternary structure, homotrimer. Binds to both RNA-binding sites in the C-terminal region of Rne and to RhlB.

The protein resides in the cytoplasm. Functionally, globally modulates RNA abundance by binding to RNase E (Rne) and regulating its endonucleolytic activity. Can modulate Rne action in a substrate-dependent manner by altering the composition of the degradosome. Modulates RNA-binding and helicase activities of the degradosome. The protein is Regulator of ribonuclease activity A of Glaesserella parasuis serovar 5 (strain SH0165) (Haemophilus parasuis).